Here is a 354-residue protein sequence, read N- to C-terminus: Histone-lysine N-methyltransferase SUVR3 (354 aa).

Positions 143–188 (SGCECERCEEGYCKCLAFAGMEEIANECGSGCGCGSDCSNRVTQKG) constitute a Pre-SET domain. Residues C145, C147, C150, C155, C157, C170, C174, C176, and C180 each coordinate Zn(2+). In terms of domain architecture, SET spans 191–323 (VSLKIVRDEK…AEEELSFSYG (133 aa)). Residues 201-203 (KGW) and 281-282 (NH) each bind S-adenosyl-L-methionine. Residue C284 participates in Zn(2+) binding. Residue Y322 coordinates S-adenosyl-L-methionine. The 17-residue stretch at 334-350 (DKLNCSCGSSCCLGTLP) folds into the Post-SET domain. Residues C338, C340, and C345 each coordinate Zn(2+).

This sequence belongs to the class V-like SAM-binding methyltransferase superfamily.

It localises to the nucleus. The protein resides in the chromosome. It catalyses the reaction L-lysyl-[histone] + S-adenosyl-L-methionine = N(6)-methyl-L-lysyl-[histone] + S-adenosyl-L-homocysteine + H(+). Functionally, histone methyltransferase. The polypeptide is Histone-lysine N-methyltransferase SUVR3 (SUVR3) (Arabidopsis thaliana (Mouse-ear cress)).